We begin with the raw amino-acid sequence, 270 residues long: Cyclic AMP-dependent transcription factor ATF-1 (270 aa).

Residues 1-91 are disordered; it reads MEDSHKSNTS…DGENPGVSAV (91 aa). The span at 9–21 shows a compositional bias: polar residues; sequence TSETAPQSGSTVQ. The KID domain occupies 31 to 90; the sequence is QVSSLSESEESQDSSDSIGSSQKTHGILARRPSYRKILKDLSSEDIRGRKGDGENPGVSA. Ser63 carries the post-translational modification Phosphoserine; by CaMK1, CDK3, RPS6KA4 and RPS6KA5. Positions 67–83 are enriched in basic and acidic residues; sequence ILKDLSSEDIRGRKGDG. Ser197 carries the phosphoserine; by HIPK2 modification. Residues Lys207 and Lys214 each participate in a glycyl lysine isopeptide (Lys-Gly) (interchain with G-Cter in SUMO2) cross-link. Residues 212–270 enclose the bZIP domain; the sequence is QLKREIRLMKNREAARECRRKKKEYVKCLENRVAVLENQNKTLIEELKTLKDLYSNKSV. Residues 214 to 238 form a basic motif region; it reads KREIRLMKNREAARECRRKKKEYVK. The segment at 240-261 is leucine-zipper; that stretch reads LENRVAVLENQNKTLIEELKTL.

The protein belongs to the bZIP family. ATF subfamily. Binds DNA as a dimer. Interacts with HIPK2 and CDK3. Interacts with MOTS-c, a peptide produced by the mitochondrially encoded 12S rRNA MT-RNR1; the interaction occurs in the nucleus following metabolic stress. Post-translationally, phosphorylated at Ser-197 by HIPK2 in response to genotoxic stress. This phosphorylation promotes transcription repression of FTH1 and other antioxidant detoxification genes. The CDK3-mediated phosphorylation at Ser-63 promotes its transactivation and transcriptional activities. Phosphorylated at Ser-63 by RPS6KA4 and RPS6KA5 in response to mitogenic or stress stimuli.

It localises to the nucleus. This protein binds the cAMP response element (CRE) (consensus: 5'-GTGACGT[AC][AG]-3'), a sequence present in many viral and cellular promoters. Mediates PKA-induced stimulation of CRE-reporter genes. Represses the expression of FTH1 and other antioxidant detoxification genes. Triggers cell proliferation and transformation. The sequence is that of Cyclic AMP-dependent transcription factor ATF-1 (ATF1) from Bos taurus (Bovine).